The primary structure comprises 384 residues: Stress response protein bis1 (384 aa).

2 disordered regions span residues 1 to 22 (MSLA…NKEQ) and 344 to 384 (SPLH…PKRV).

Belongs to the ESS2 family. As to quaternary structure, heterodimer with ish1.

It localises to the nucleus. The protein localises to the cytoplasm. The protein resides in the cytoskeleton. It is found in the spindle. Functionally, has a role in maintaining cell viability during stationary phase induced by stress response. May be involved in pre-mRNA splicing. This Schizosaccharomyces pombe (strain 972 / ATCC 24843) (Fission yeast) protein is Stress response protein bis1 (bis1).